Reading from the N-terminus, the 31-residue chain is Photosystem I reaction center subunit XII (31 aa).

A helical transmembrane segment spans residues 7–26 (QVFLALIIALIPGILADRLG).

Belongs to the PsaM family.

It is found in the plastid. The protein resides in the chloroplast thylakoid membrane. The protein is Photosystem I reaction center subunit XII of Euglena deses.